The primary structure comprises 135 residues: Small ribosomal subunit protein uS12 (135 aa).

Asp-89 is modified (3-methylthioaspartic acid). The tract at residues 101–135 is disordered; the sequence is SLDTSGVADRKQSRSKYGAKQPKAGAAAPAKGKGR. The span at 118–135 shows a compositional bias: low complexity; that stretch reads GAKQPKAGAAAPAKGKGR.

It belongs to the universal ribosomal protein uS12 family. As to quaternary structure, part of the 30S ribosomal subunit. Contacts proteins S8 and S17. May interact with IF1 in the 30S initiation complex.

Its function is as follows. With S4 and S5 plays an important role in translational accuracy. Functionally, interacts with and stabilizes bases of the 16S rRNA that are involved in tRNA selection in the A site and with the mRNA backbone. Located at the interface of the 30S and 50S subunits, it traverses the body of the 30S subunit contacting proteins on the other side and probably holding the rRNA structure together. The combined cluster of proteins S8, S12 and S17 appears to hold together the shoulder and platform of the 30S subunit. The sequence is that of Small ribosomal subunit protein uS12 from Chlorobium limicola (strain DSM 245 / NBRC 103803 / 6330).